A 1139-amino-acid polypeptide reads, in one-letter code: Sterol regulatory element-binding protein 2 (1139 aa).

The segment at 1 to 50 is transcriptional activation (acidic); that stretch reads MDESSELGGLETMDTLTELGDELTLGDIDEMLQFVSNQVGEFPDLFSEQL. Topologically, residues 1–479 are cytoplasmic; that stretch reads MDESSELGGL…VALGMVDRSR (479 aa). Disordered stretches follow at residues 48 to 104 and 119 to 143; these read EQLC…SPST and TPPR…SAQL. Low complexity predominate over residues 61 to 77; it reads GSSSSSNSSSSSGSNSR. A compositionally biased stretch (polar residues) spans 90 to 104; the sequence is RSFSQVPLPTFSPST. Pro residues predominate over residues 119–138; sequence TPPRATPVLQPRPQPQPQPQ. The interaction with LMNA stretch occupies residues 235 to 489; the sequence is QQVPVLVQPQ…ILLCVLTFLG (255 aa). Residues 328-378 form the bHLH domain; the sequence is ERRTTHNIIEKRYRSSINDKIIELKDLVMGTDAKMHKSGVLRKAIDYIKYL. The segment at 378–399 is leucine-zipper; it reads LQQVNHKLRQENMVLKLANQKN. K462 participates in a covalent cross-link: Glycyl lysine isopeptide (Lys-Gly) (interchain with G-Cter in SUMO2). Residues 480–500 form a helical membrane-spanning segment; that stretch reads ILLCVLTFLGLSFSPLTSLLQ. At 501–531 the chain is on the lumenal side; it reads WGGAHDTDQHPYSGSGRSVLSLESGSGGWFD. A helical transmembrane segment spans residues 532–552; the sequence is WMMPTLLLWLVNGVIVLSVFV. Residues 553 to 1139 lie on the Cytoplasmic side of the membrane; sequence KLLVHGEPVI…LGGGTAIAAS (587 aa). S1096 is modified (phosphoserine).

Belongs to the SREBP family. In terms of assembly, homodimer; efficient DNA binding of the soluble transcription factor fragment requires dimerization with another bHLH protein. Interacts with LMNA. Forms a tight complex with SCAP, the SCAP-SREBP complex, in the endoplasmic reticulum membrane and the Golgi apparatus. Interacts with PAQR3; the interaction anchors the SCAP-SREBP complex to the Golgi apparatus in low cholesterol conditions. Interacts (via C-terminal domain) with RNF139. Processed in the Golgi apparatus, releasing the protein from the membrane. At low cholesterol the SCAP-SREBP complex is recruited into COPII vesicles for export from the endoplasmic reticulum. In the Golgi, complex SREBPs are cleaved sequentially by site-1 (MBTPS1, S1P) and site-2 (MBTPS2, S2P) proteases. The first cleavage by site-1 protease occurs within the luminal loop, the second cleavage by site-2 protease occurs within the first transmembrane domain, releasing the transcription factor from the Golgi membrane. Apoptosis triggers cleavage by the cysteine proteases caspase-3 and caspase-7. Cleavage and activation is induced by mediated cholesterol efflux. Post-translationally, phosphorylated by AMPK, leading to suppress protein processing and nuclear translocation, and repress target gene expression. In terms of processing, SCAP-free SREBF2 is ubiquitinated by the BCR(ARMC5) complex, leading to its degradation. Ubiquitinated; the nuclear form has a rapid turnover and is rapidly ubiquitinated and degraded by the proteasome in the nucleus.

The protein resides in the endoplasmic reticulum membrane. The protein localises to the golgi apparatus membrane. It localises to the cytoplasmic vesicle. It is found in the COPII-coated vesicle membrane. Its subcellular location is the nucleus. Its activity is regulated as follows. Activation by cleavage is down-regulated upon activation of SIRT3-dependent PRKAA1/AMPK-alpha signaling cascade which leads to inhibition of ATP-consuming lipogenesis to restore cellular energy balance. Precursor of the transcription factor form (Processed sterol regulatory element-binding protein 2), which is embedded in the endoplasmic reticulum membrane. Low sterol concentrations promote processing of this form, releasing the transcription factor form that translocates into the nucleus and activates transcription of genes involved in cholesterol biosynthesis. In terms of biological role, key transcription factor that regulates expression of genes involved in cholesterol biosynthesis. Binds to the sterol regulatory element 1 (SRE-1) (5'-ATCACCCCAC-3'). Has dual sequence specificity binding to both an E-box motif (5'-ATCACGTGA-3') and to SRE-1 (5'-ATCACCCCAC-3'). Regulates transcription of genes related to cholesterol synthesis pathway. In Cricetulus griseus (Chinese hamster), this protein is Sterol regulatory element-binding protein 2 (SREBF2).